The primary structure comprises 158 residues: MKSKKSKSTNNTIALNKKARHDYILQDKIEAGIELQGWEVKSIRSGKVNLSDSYVTLHKGEAFLVGSTIQPLNQASSHVVCEPLRQRKLLLNKRELDKLIGSVERQGYSILATAMYWKKNWVKVEIYLGKGKHEHDKRDAVKDRDWARDKERMMKHKV.

It belongs to the SmpB family.

The protein localises to the cytoplasm. Its function is as follows. Required for rescue of stalled ribosomes mediated by trans-translation. Binds to transfer-messenger RNA (tmRNA), required for stable association of tmRNA with ribosomes. tmRNA and SmpB together mimic tRNA shape, replacing the anticodon stem-loop with SmpB. tmRNA is encoded by the ssrA gene; the 2 termini fold to resemble tRNA(Ala) and it encodes a 'tag peptide', a short internal open reading frame. During trans-translation Ala-aminoacylated tmRNA acts like a tRNA, entering the A-site of stalled ribosomes, displacing the stalled mRNA. The ribosome then switches to translate the ORF on the tmRNA; the nascent peptide is terminated with the 'tag peptide' encoded by the tmRNA and targeted for degradation. The ribosome is freed to recommence translation, which seems to be the essential function of trans-translation. The protein is SsrA-binding protein of Pseudoalteromonas atlantica (strain T6c / ATCC BAA-1087).